We begin with the raw amino-acid sequence, 264 residues long: Thymidylate synthase (264 aa).

Position 21 (Arg-21) interacts with dUMP. His-51 provides a ligand contact to (6R)-5,10-methylene-5,6,7,8-tetrahydrofolate. DUMP is bound at residue 126–127 (RR). Cys-146 functions as the Nucleophile in the catalytic mechanism. DUMP contacts are provided by residues 166–169 (RSAD), Asn-177, and 207–209 (HLY). Asp-169 lines the (6R)-5,10-methylene-5,6,7,8-tetrahydrofolate pocket. A (6R)-5,10-methylene-5,6,7,8-tetrahydrofolate-binding site is contributed by Ala-263.

This sequence belongs to the thymidylate synthase family. Bacterial-type ThyA subfamily. In terms of assembly, homodimer.

The protein localises to the cytoplasm. It catalyses the reaction dUMP + (6R)-5,10-methylene-5,6,7,8-tetrahydrofolate = 7,8-dihydrofolate + dTMP. It functions in the pathway pyrimidine metabolism; dTTP biosynthesis. Its function is as follows. Catalyzes the reductive methylation of 2'-deoxyuridine-5'-monophosphate (dUMP) to 2'-deoxythymidine-5'-monophosphate (dTMP) while utilizing 5,10-methylenetetrahydrofolate (mTHF) as the methyl donor and reductant in the reaction, yielding dihydrofolate (DHF) as a by-product. This enzymatic reaction provides an intracellular de novo source of dTMP, an essential precursor for DNA biosynthesis. This is Thymidylate synthase from Chromobacterium violaceum (strain ATCC 12472 / DSM 30191 / JCM 1249 / CCUG 213 / NBRC 12614 / NCIMB 9131 / NCTC 9757 / MK).